Here is a 435-residue protein sequence, read N- to C-terminus: MYKSITTLLKQQPQSILRNYSTDKFPRGFKTGTAACGLKKTGNKDICIIHSSAPCNVAAVFTENKVKAAPVLLSKQLLETNNYKGFNSLVINSGGANACTGEQGLKNAKTMSNLTSSLLKAPQASLVMSTGIIGQQLDMSKVEKGIADAVTTLNESDWISAARAIMTTDKVPKLAQKSVSLNGGEVHIVGICKGAGMIHPNMATMLCTVCTDASISEDCLRALLKHSVHYSFNSINVDGDMSTNDTVAIFANGSAGNKHITDTTSSDFLQLQEAVREVTTRLAQMIVRDAEGASKFVTIKIHGADTEQNGHIVANSISTSSLVKSALYGEDANWGRVLAAVGYSGVDIDPLKVCMWFAKGDGKDVGLGKKNDPETSMQFLEKGTPLAKDENKAAQLLSNNDVAIVVELGMGKASSTMWTCDLTEEYVRANSHYRT.

Positions 167, 193, 204, 291, 430, and 435 each coordinate substrate. T204 acts as the Nucleophile in catalysis.

It belongs to the ArgJ family. Heterodimer of an alpha and a beta chain. Post-translationally, the alpha and beta chains are autoproteolytically processed from a single precursor protein within the mitochondrion.

It is found in the mitochondrion matrix. It carries out the reaction N(2)-acetyl-L-ornithine + L-glutamate = N-acetyl-L-glutamate + L-ornithine. The enzyme catalyses L-glutamate + acetyl-CoA = N-acetyl-L-glutamate + CoA + H(+). The protein operates within amino-acid biosynthesis; L-arginine biosynthesis; L-ornithine and N-acetyl-L-glutamate from L-glutamate and N(2)-acetyl-L-ornithine (cyclic): step 1/1. Its pathway is amino-acid biosynthesis; L-arginine biosynthesis; N(2)-acetyl-L-ornithine from L-glutamate: step 1/4. In terms of biological role, catalyzes two activities which are involved in the cyclic version of arginine biosynthesis: the synthesis of acetylglutamate from glutamate and acetyl-CoA, and of ornithine by transacetylation between acetylornithine and glutamate. The protein is Arginine biosynthesis bifunctional protein ArgJ, mitochondrial of Heterostelium pallidum (strain ATCC 26659 / Pp 5 / PN500) (Cellular slime mold).